Reading from the N-terminus, the 350-residue chain is 3-dehydroquinate synthase (350 aa).

Residues 106-110 (GVVGD), 130-131 (TS), lysine 143, and lysine 152 each bind NAD(+). Glutamate 185, histidine 246, and histidine 263 together coordinate Zn(2+).

The protein belongs to the sugar phosphate cyclases superfamily. Dehydroquinate synthase family. Co(2+) is required as a cofactor. The cofactor is Zn(2+). NAD(+) serves as cofactor.

Its subcellular location is the cytoplasm. It carries out the reaction 7-phospho-2-dehydro-3-deoxy-D-arabino-heptonate = 3-dehydroquinate + phosphate. It participates in metabolic intermediate biosynthesis; chorismate biosynthesis; chorismate from D-erythrose 4-phosphate and phosphoenolpyruvate: step 2/7. Catalyzes the conversion of 3-deoxy-D-arabino-heptulosonate 7-phosphate (DAHP) to dehydroquinate (DHQ). This chain is 3-dehydroquinate synthase, found in Clostridium perfringens (strain SM101 / Type A).